Consider the following 286-residue polypeptide: Ribosomal RNA small subunit methyltransferase H (286 aa).

S-adenosyl-L-methionine is bound by residues 25 to 27 (GGH), Asp-45, Leu-79, Asp-93, and Gln-100.

This sequence belongs to the methyltransferase superfamily. RsmH family.

It localises to the cytoplasm. It catalyses the reaction cytidine(1402) in 16S rRNA + S-adenosyl-L-methionine = N(4)-methylcytidine(1402) in 16S rRNA + S-adenosyl-L-homocysteine + H(+). Its function is as follows. Specifically methylates the N4 position of cytidine in position 1402 (C1402) of 16S rRNA. This chain is Ribosomal RNA small subunit methyltransferase H, found in Petrotoga mobilis (strain DSM 10674 / SJ95).